Consider the following 374-residue polypeptide: 4-galactosyl-N-acetylglucosaminide 3-alpha-L-fucosyltransferase FUT5 (374 aa).

Over 1-15 (MDPLGPAKPQWLWRR) the chain is Cytoplasmic. A helical; Signal-anchor for type II membrane protein transmembrane segment spans residues 16 to 34 (CLAGLLFQLLVAVCFFSYL). Over 35–374 (RVSQDHATGS…TVRSIAAWFT (340 aa)) the chain is Lumenal. N-linked (GlcNAc...) asparagine glycans are attached at residues Asn-60, Asn-105, Asn-167, and Asn-198.

It belongs to the glycosyltransferase 10 family.

Its subcellular location is the golgi apparatus. The protein localises to the golgi stack membrane. The enzyme catalyses a beta-D-galactosyl-(1-&gt;3)-N-acetyl-beta-D-glucosaminyl derivative + GDP-beta-L-fucose = a beta-D-galactosyl-(1-&gt;3)-[alpha-L-fucosyl-(1-&gt;4)]-N-acetyl-beta-D-glucosaminyl derivative + GDP + H(+). It carries out the reaction an N-acetyl-alpha-neuraminyl-(2-&gt;3)-beta-D-galactosyl-(1-&gt;4)-N-acetyl-beta-D-glucosaminyl derivative + GDP-beta-L-fucose = an alpha-Neu5Ac-(2-&gt;3)-beta-D-Gal-(1-&gt;4)-[alpha-L-Fuc-(1-&gt;3)]-beta-D-GlcNAc derivative + GDP + H(+). It catalyses the reaction an alpha-Neu5Ac-(2-&gt;3)-beta-D-Gal-(1-&gt;4)-beta-D-GlcNAc-(1-&gt;3)-beta-D-Gal-(1-&gt;4)-[alpha-L-Fuc-(1-&gt;3)]-beta-D-GlcNAc derivative + GDP-beta-L-fucose = an alpha-Neu5Ac-(2-&gt;3)-beta-D-Gal-(1-&gt;4)-[alpha-L-Fuc-(1-&gt;3)]-beta-D-GlcNAc-(1-&gt;3)-beta-D-Gal-(1-&gt;4)-[alpha-L-Fuc-(1-&gt;3)]-beta-D-GlcNAc derivative + GDP + H(+). The catalysed reaction is a beta-D-galactosyl-(1-&gt;4)-N-acetyl-beta-D-glucosaminyl derivative + GDP-beta-L-fucose = a beta-D-galactosyl-(1-&gt;4)-[alpha-L-fucosyl-(1-&gt;3)]-N-acetyl-beta-D-glucosaminyl derivative + GDP + H(+). The enzyme catalyses a neolactoside nLc4Cer + GDP-beta-L-fucose = a neolactoside III(3)-alpha-Fuc-nLc4Cer + GDP + H(+). It carries out the reaction a neolactoside nLc6Cer + GDP-beta-L-fucose = beta-D-galactosyl-(1-&gt;4)-N-acetyl-beta-D-glucosaminyl-(1-&gt;3)-beta-D-galactosyl-(1-&gt;4)-[alpha-L-fucosyl-(1-&gt;3)]-N-acetyl-beta-D-glucosaminyl-(1-&gt;3)-beta-D-galactosyl-(1-&gt;4)-beta-D-glucosyl-(1&lt;-&gt;1')-ceramide + GDP + H(+). It catalyses the reaction a neolactoside nLc6Cer(d18:1(4E)) + GDP-beta-L-fucose = a neolactoside III(3)-alpha-Fuc-nLc6Cer(d18:1(4E)) + GDP + H(+). The catalysed reaction is a neolactoside nLc4Cer(d18:1(4E)) + GDP-beta-L-fucose = a neolactoside III(3)-alpha-Fuc-nLc4Cer(d18:1(4E)) + GDP + H(+). The enzyme catalyses a neolactoside VI(3)-alpha-NeuNAc-nLc6Cer + GDP-beta-L-fucose = a neolactoside VI(3)-alpha-NeuAc,III(3)-alphaFuc-nLc6Cer + GDP + H(+). It carries out the reaction beta-D-galactosyl-(1-&gt;4)-N-acetyl-D-glucosamine + GDP-beta-L-fucose = beta-D-galactosyl-(1-&gt;4)-[alpha-L-fucosyl-(1-&gt;3)]-N-acetyl-D-glucosamine + GDP + H(+). It catalyses the reaction N-acetyl-alpha-neuraminosyl-(2-&gt;3)-beta-D-galactosyl-(1-&gt;4)-N-acetyl-beta-D-glucosamine + GDP-beta-L-fucose = N-acetyl-alpha-neuraminosyl-(2-&gt;3)-beta-D-galactosyl-(1-&gt;4)-[alpha-L-fucosyl-(1-&gt;3)]-N-acetyl-beta-D-glucosamine + GDP + H(+). The catalysed reaction is alpha-L-Fuc-(1-&gt;2)-beta-D-Gal-(1-&gt;4)-D-GlcNAc + GDP-beta-L-fucose = alpha-L-Fuc-(1-&gt;2)-beta-D-Gal-(1-&gt;4)-[alpha-L-Fuc-(1-&gt;3)]-D-GlcNAc + GDP + H(+). The enzyme catalyses an alpha-Neu5Ac-(2-&gt;3)-beta-D-Gal-(1-&gt;3)-D-GlcNAc derivative + GDP-beta-L-fucose = an alpha-Neu5Ac-(2-&gt;3)-beta-D-Gal-(1-&gt;3)-[alpha-L-Fuc-(1-&gt;4)]-beta-D-GlcNAc derivative + GDP + H(+). Its pathway is protein modification; protein glycosylation. Its function is as follows. Catalyzes preferentially the transfer of L-fucose, from a guanosine diphosphate-beta-L-fucose, to the N-acetyl-beta-D-glucosamine (GlcNAc) of an N-acetyllactosamine unit (type 2 chain) of an oligosaccharide, or a glycoprotein- and a glycolipid-linked N-acetyllactosamine unit via an alpha (1,3) linkage and participates in the surface expression of VIM-2, Lewis X/SSEA-1 and sialyl Lewis X antigens. Preferentially transfers fucose to the GlcNAc of an internal N-acetyllactosamine unit of a poly-N-acetyllactosamine chain acceptor substrate. Also catalyzes to a lesser extend the transfer of L-fucose to the GlcNAc of a type 1 (beta-D-galactosyl-(1-&gt;3)-N-acetyl-beta-D-glucosaminyl) or H-type 1 (alpha-L-Fuc-(1-&gt;2)-beta-D-Gal-(1-&gt;3)-D-GlcNAc) chain oligosaccharide via an alpha (1,4) linkage. Preferentially catalyzes sialylated type 2 oligosaccharide acceptors over neutral type 2 or H type 2 (alpha-L-Fuc-(1-&gt;2)-beta-D-Gal-(1-&gt;4)-D-GlcNAc) oligosaccharide acceptors. Lactose-based structures are also acceptor substrates. The sequence is that of 4-galactosyl-N-acetylglucosaminide 3-alpha-L-fucosyltransferase FUT5 from Gorilla gorilla gorilla (Western lowland gorilla).